Consider the following 128-residue polypeptide: S-adenosylmethionine decarboxylase proenzyme (128 aa).

Ser-63 serves as the catalytic Schiff-base intermediate with substrate; via pyruvic acid. Ser-63 is subject to Pyruvic acid (Ser); by autocatalysis. The Proton acceptor; for processing activity role is filled by His-68. The active-site Proton donor; for catalytic activity is Cys-83.

The protein belongs to the prokaryotic AdoMetDC family. Type 1 subfamily. In terms of assembly, heterotetramer of two alpha and two beta chains arranged as a dimer of alpha/beta heterodimers. It depends on pyruvate as a cofactor. Is synthesized initially as an inactive proenzyme. Formation of the active enzyme involves a self-maturation process in which the active site pyruvoyl group is generated from an internal serine residue via an autocatalytic post-translational modification. Two non-identical subunits are generated from the proenzyme in this reaction, and the pyruvate is formed at the N-terminus of the alpha chain, which is derived from the carboxyl end of the proenzyme. The post-translation cleavage follows an unusual pathway, termed non-hydrolytic serinolysis, in which the side chain hydroxyl group of the serine supplies its oxygen atom to form the C-terminus of the beta chain, while the remainder of the serine residue undergoes an oxidative deamination to produce ammonia and the pyruvoyl group blocking the N-terminus of the alpha chain.

The catalysed reaction is S-adenosyl-L-methionine + H(+) = S-adenosyl 3-(methylsulfanyl)propylamine + CO2. The protein operates within amine and polyamine biosynthesis; S-adenosylmethioninamine biosynthesis; S-adenosylmethioninamine from S-adenosyl-L-methionine: step 1/1. Catalyzes the decarboxylation of S-adenosylmethionine to S-adenosylmethioninamine (dcAdoMet), the propylamine donor required for the synthesis of the polyamines spermine and spermidine from the diamine putrescine. The chain is S-adenosylmethionine decarboxylase proenzyme from Leptospira borgpetersenii serovar Hardjo-bovis (strain JB197).